The primary structure comprises 167 residues: Small ribosomal subunit protein uS5 (167 aa).

In terms of domain architecture, S5 DRBM spans 12-75 (LNEKLIAVNR…EKARRNIRDV (64 aa)).

It belongs to the universal ribosomal protein uS5 family. In terms of assembly, part of the 30S ribosomal subunit. Contacts proteins S4 and S8.

Functionally, with S4 and S12 plays an important role in translational accuracy. In terms of biological role, located at the back of the 30S subunit body where it stabilizes the conformation of the head with respect to the body. This Psychromonas ingrahamii (strain DSM 17664 / CCUG 51855 / 37) protein is Small ribosomal subunit protein uS5.